The following is a 701-amino-acid chain: Ribosomal RNA large subunit methyltransferase K/L (701 aa).

The THUMP domain occupies 43–154 (LLYQSLMWSR…KETAHISLDL (112 aa)).

The protein belongs to the methyltransferase superfamily. RlmKL family.

It is found in the cytoplasm. The enzyme catalyses guanosine(2445) in 23S rRNA + S-adenosyl-L-methionine = N(2)-methylguanosine(2445) in 23S rRNA + S-adenosyl-L-homocysteine + H(+). It catalyses the reaction guanosine(2069) in 23S rRNA + S-adenosyl-L-methionine = N(2)-methylguanosine(2069) in 23S rRNA + S-adenosyl-L-homocysteine + H(+). In terms of biological role, specifically methylates the guanine in position 2445 (m2G2445) and the guanine in position 2069 (m7G2069) of 23S rRNA. This Klebsiella pneumoniae subsp. pneumoniae (strain ATCC 700721 / MGH 78578) protein is Ribosomal RNA large subunit methyltransferase K/L.